Reading from the N-terminus, the 265-residue chain is 3-methyl-2-oxobutanoate hydroxymethyltransferase (265 aa).

Mg(2+)-binding residues include D46 and D85. 3-methyl-2-oxobutanoate contacts are provided by residues 46 to 47, D85, and K114; that span reads DS. E116 lines the Mg(2+) pocket. E183 acts as the Proton acceptor in catalysis.

It belongs to the PanB family. As to quaternary structure, homodecamer; pentamer of dimers. Mg(2+) is required as a cofactor.

The protein localises to the cytoplasm. It catalyses the reaction 3-methyl-2-oxobutanoate + (6R)-5,10-methylene-5,6,7,8-tetrahydrofolate + H2O = 2-dehydropantoate + (6S)-5,6,7,8-tetrahydrofolate. It functions in the pathway cofactor biosynthesis; coenzyme A biosynthesis. Functionally, catalyzes the reversible reaction in which hydroxymethyl group from 5,10-methylenetetrahydrofolate is transferred onto alpha-ketoisovalerate to form ketopantoate. This is 3-methyl-2-oxobutanoate hydroxymethyltransferase from Caldivirga maquilingensis (strain ATCC 700844 / DSM 13496 / JCM 10307 / IC-167).